A 59-amino-acid polypeptide reads, in one-letter code: Antibacterial peptide enbocin (59 aa).

The signal sequence occupies residues 1 to 20; that stretch reads MNFTRIIFFLFVVVFATASG. Residue K21 is a propeptide. Position 58 is a serine amide (S58).

Belongs to the cecropin family.

It is found in the secreted. Functionally, has antibacterial activity against Gram-positive and Gram-negative bacteria. The sequence is that of Antibacterial peptide enbocin from Bombyx mori (Silk moth).